The sequence spans 375 residues: Nicotinate-nucleotide--dimethylbenzimidazole phosphoribosyltransferase (375 aa).

Glutamate 323 acts as the Proton acceptor in catalysis. Positions 344-375 (LPEKPEELEAGEGPEAAEESSPEPENPEALAE) are disordered. Residues 351–375 (LEAGEGPEAAEESSPEPENPEALAE) show a composition bias toward acidic residues.

The protein belongs to the CobT family.

The catalysed reaction is 5,6-dimethylbenzimidazole + nicotinate beta-D-ribonucleotide = alpha-ribazole 5'-phosphate + nicotinate + H(+). It functions in the pathway nucleoside biosynthesis; alpha-ribazole biosynthesis; alpha-ribazole from 5,6-dimethylbenzimidazole: step 1/2. Catalyzes the synthesis of alpha-ribazole-5'-phosphate from nicotinate mononucleotide (NAMN) and 5,6-dimethylbenzimidazole (DMB). This chain is Nicotinate-nucleotide--dimethylbenzimidazole phosphoribosyltransferase, found in Streptomyces avermitilis (strain ATCC 31267 / DSM 46492 / JCM 5070 / NBRC 14893 / NCIMB 12804 / NRRL 8165 / MA-4680).